A 91-amino-acid chain; its full sequence is MGRSLKKGPFADAHLLKKIDAQSDSDKKSVIKTWSRRSTIFPSFIGYTIAVYDGRKHVPVYIQDDMVGHKLGEFVPTRTFHGHGTDDKKTK.

The protein belongs to the universal ribosomal protein uS19 family.

In terms of biological role, protein S19 forms a complex with S13 that binds strongly to the 16S ribosomal RNA. The chain is Small ribosomal subunit protein uS19 from Lactiplantibacillus plantarum (strain ATCC BAA-793 / NCIMB 8826 / WCFS1) (Lactobacillus plantarum).